A 122-amino-acid polypeptide reads, in one-letter code: Cysteine proteinase inhibitor 5 (122 aa).

The N-terminal stretch at 1–26 (MTSKVVFLLLLSLVVVLLPLYASAAA) is a signal peptide. In terms of domain architecture, Cystatin spans 29 to 117 (GGWSPISNVT…RNLTSFEPAN (89 aa)). Residue Asn36 is glycosylated (N-linked (GlcNAc...) asparagine). Residues 72 to 76 (QVVSG) carry the Secondary area of contact motif. Asn109 is a glycosylation site (N-linked (GlcNAc...) asparagine).

Belongs to the cystatin family. Phytocystatin subfamily.

It localises to the secreted. In terms of biological role, specific inhibitor of cysteine proteinases. Probably involved in the regulation of endogenous processes and in defense against pests and pathogens. This is Cysteine proteinase inhibitor 5 (CYS5) from Arabidopsis thaliana (Mouse-ear cress).